Reading from the N-terminus, the 215-residue chain is MOB kinase activator-like 1A (215 aa).

Residues Met1–Leu29 are disordered. Zn(2+)-binding residues include Cys80, Cys85, His162, and His167.

It belongs to the MOB1/phocein family. As to expression, isoform 1 is constitutively expressed. Isoform 2 is specifically expressed in flowers bud during sporogenesis and gametogenesis.

The protein localises to the cytoplasm. It is found in the cytoskeleton. The protein resides in the phragmoplast. This is MOB kinase activator-like 1A from Medicago sativa subsp. falcata (Sickle medic).